Consider the following 396-residue polypeptide: 3-amino-4-hydroxybenzoate 2-monooxygenase PtnB3 (396 aa).

FAD is bound by residues Ala-19, 38 to 39 (EQ), and Arg-112. The active-site Proton acceptor is Tyr-217. Residue Asp-295 participates in FAD binding.

This sequence belongs to the 6-hydroxynicotinate 3-monooxygenase family. Requires FAD as cofactor.

The catalysed reaction is 3-amino-4-hydroxybenzoate + NADPH + O2 + H(+) = 3-amino-2,4-dihydroxybenzoate + NADP(+) + H2O. It participates in antibiotic biosynthesis. In terms of biological role, part of a gene cluster involved in the biosynthesis of thioplatencin (ThioPTN) and platencin (PTN), potent and selective inhibitors of bacterial and mammalian fatty acid synthases. Catalyzes the hydroxylation of 3-amino-4-hydroxybenzoate (3,4-AHBA) to 3-amino-2,4-dihydroxybenzoate (3,2,4-ADHBA). This is 3-amino-4-hydroxybenzoate 2-monooxygenase PtnB3 from Streptomyces platensis.